A 216-amino-acid chain; its full sequence is Small ribosomal subunit protein uS3 (216 aa).

The region spanning 38–106 is the KH type-2 domain; sequence LRKMLKDKLY…QANIEIKEVR (69 aa).

Belongs to the universal ribosomal protein uS3 family. As to quaternary structure, part of the 30S ribosomal subunit. Forms a tight complex with proteins S10 and S14.

In terms of biological role, binds the lower part of the 30S subunit head. Binds mRNA in the 70S ribosome, positioning it for translation. The protein is Small ribosomal subunit protein uS3 of Thermodesulfovibrio yellowstonii (strain ATCC 51303 / DSM 11347 / YP87).